The following is a 264-amino-acid chain: Type III pantothenate kinase (264 aa).

ATP is bound at residue 6–13 (DSGNSRLK). Substrate contacts are provided by residues Y92 and 99–102 (GADR). D101 functions as the Proton acceptor in the catalytic mechanism. T127 provides a ligand contact to ATP. Position 177 (T177) interacts with substrate.

This sequence belongs to the type III pantothenate kinase family. Homodimer. NH4(+) serves as cofactor. The cofactor is K(+).

The protein localises to the cytoplasm. It carries out the reaction (R)-pantothenate + ATP = (R)-4'-phosphopantothenate + ADP + H(+). It participates in cofactor biosynthesis; coenzyme A biosynthesis; CoA from (R)-pantothenate: step 1/5. In terms of biological role, catalyzes the phosphorylation of pantothenate (Pan), the first step in CoA biosynthesis. The polypeptide is Type III pantothenate kinase (Bordetella petrii (strain ATCC BAA-461 / DSM 12804 / CCUG 43448)).